The following is a 228-amino-acid chain: Sec-independent protein translocase protein TatB (228 aa).

A helical transmembrane segment spans residues 1–21; that stretch reads MFDFGLGELVFVGIIALIVLG. Disordered stretches follow at residues 109–162 and 197–228; these read DFGV…AETD and PHTT…VRKS. Over residues 206-228 the composition is skewed to basic residues; that stretch reads AISRKRDFRPKHRAKPKLRVRKS.

Belongs to the TatB family. In terms of assembly, the Tat system comprises two distinct complexes: a TatABC complex, containing multiple copies of TatA, TatB and TatC subunits, and a separate TatA complex, containing only TatA subunits. Substrates initially bind to the TatABC complex, which probably triggers association of the separate TatA complex to form the active translocon.

It localises to the cell inner membrane. Part of the twin-arginine translocation (Tat) system that transports large folded proteins containing a characteristic twin-arginine motif in their signal peptide across membranes. Together with TatC, TatB is part of a receptor directly interacting with Tat signal peptides. TatB may form an oligomeric binding site that transiently accommodates folded Tat precursor proteins before their translocation. This is Sec-independent protein translocase protein TatB from Neisseria meningitidis serogroup B (strain ATCC BAA-335 / MC58).